Reading from the N-terminus, the 1478-residue chain is Adhesion G protein-coupled receptor L2 (1478 aa).

Positions Met1–Gly25 are cleaved as a signal peptide. Residues Phe26–Thr855 lie on the Extracellular side of the membrane. The region spanning Ser41–Val130 is the SUEL-type lectin domain. The N-linked (GlcNAc...) asparagine glycan is linked to Asn99. The Olfactomedin-like domain maps to Val139–Pro398. Cys140 and Cys322 are joined by a disulfide. Residue Asn335 is glycosylated (N-linked (GlcNAc...) asparagine). The tract at residues Val422–Lys458 is disordered. Over residues Gln430–Ser445 the composition is skewed to polar residues. Asn524, Asn633, Asn735, Asn748, Asn791, Asn796, and Asn817 each carry an N-linked (GlcNAc...) asparagine glycan. In terms of domain architecture, GAIN-B spans Thr663–Ala841. 2 disulfides stabilise this stretch: Cys792/Cys823 and Cys811/Cys825. Positions Cys792–Ala841 are GPS. A helical membrane pass occupies residues Trp856–Phe876. Residues Arg877–Asn884 lie on the Cytoplasmic side of the membrane. Residues Thr885–Ile905 form a helical membrane-spanning segment. At Asp906–Met911 the chain is on the extracellular side. A helical transmembrane segment spans residues Ile912–Met932. Residues Cys933–Lys955 are Cytoplasmic-facing. A helical membrane pass occupies residues Tyr956 to Asp976. At Tyr977–Phe994 the chain is on the extracellular side. A helical transmembrane segment spans residues Ile995 to Ile1015. Over Thr1016–Val1056 the chain is Cytoplasmic. A helical transmembrane segment spans residues Leu1057–Ile1077. At Asn1078–Thr1081 the chain is on the extracellular side. A helical membrane pass occupies residues Ile1082–Phe1102. Residues His1103–Leu1478 lie on the Cytoplasmic side of the membrane. The tract at residues Ala1378–Ser1419 is disordered. The segment covering Gln1383–Pro1395 has biased composition (polar residues). A phosphoserine mark is found at Ser1393, Ser1428, and Ser1449.

The protein belongs to the G-protein coupled receptor 2 family. Adhesion G-protein coupled receptor (ADGR) subfamily. In terms of assembly, heterodimer of 2 chains generated by proteolytic processing; the large extracellular N-terminal fragment and the membrane-bound C-terminal fragment predominantly remain associated and non-covalently linked. Post-translationally, autoproteolytically processed at the GPS region of the GAIN-B domain; this cleavage modulates receptor activity. Ubiquitously expressed.

The protein localises to the postsynaptic cell membrane. With respect to regulation, forms a heterodimer of 2 chains generated by proteolytic processing that remain associated through non-covalent interactions mediated by the GAIN-B domain. In the inactivated receptor, the Stachel sequence (also named stalk) is embedded in the GAIN-B domain, where it adopts a beta-strand conformation. On activation, the Stachel moves into the 7 transmembrane region and adopts a twisted hook-shaped configuration that forms contacts within the receptor, leading to coupling of a G-alpha protein, which activates signaling. The cleaved GAIN-B and N-terminal domains can then dissociate from the rest of the receptor. In terms of biological role, orphan adhesion G-protein coupled receptor (aGPCR), which mediates synapse specificity. Ligand binding causes a conformation change that triggers signaling via guanine nucleotide-binding proteins (G proteins) and modulates the activity of downstream effectors. Following G-protein coupled receptor activation, associates with cell adhesion molecules that are expressed at the surface of adjacent cells to direct synapse specificity. Specifically mediates the establishment of perforant-path synapses on CA1-region pyramidal neurons in the hippocampus. Localizes to postsynaptic spines in excitatory synapses in the S.lacunosum-moleculare and interacts with presynaptic cell adhesion molecules, such as teneurins, promoting synapse formation. This Bos taurus (Bovine) protein is Adhesion G protein-coupled receptor L2 (ADGRL2).